Here is a 402-residue protein sequence, read N- to C-terminus: Dihydrolipoyllysine-residue acetyltransferase component of pyruvate dehydrogenase complex (402 aa).

The Lipoyl-binding domain occupies 1–69 (MPDIGLEEVE…KTSSIIMIFK (69 aa)). At Lys-35 the chain carries N6-lipoyllysine. In terms of domain architecture, Peripheral subunit-binding (PSBD) spans 109–146 (HATPVVRRLARHLNVDLKNITPSGPKNRILKEDIELYI). His-375 is a catalytic residue.

It belongs to the 2-oxoacid dehydrogenase family. As to quaternary structure, forms a 24-polypeptide structural core with octahedral symmetry. It depends on (R)-lipoate as a cofactor.

The catalysed reaction is N(6)-[(R)-dihydrolipoyl]-L-lysyl-[protein] + acetyl-CoA = N(6)-[(R)-S(8)-acetyldihydrolipoyl]-L-lysyl-[protein] + CoA. Its function is as follows. The pyruvate dehydrogenase complex catalyzes the overall conversion of pyruvate to acetyl-CoA and CO(2). It contains multiple copies of three enzymatic components: pyruvate dehydrogenase (E1), dihydrolipoamide acetyltransferase (E2) and lipoamide dehydrogenase (E3). This Buchnera aphidicola subsp. Schizaphis graminum (strain Sg) protein is Dihydrolipoyllysine-residue acetyltransferase component of pyruvate dehydrogenase complex (aceF).